The chain runs to 659 residues: MASAGKPALDDSRRGTGSPKMKARENAKDTLCRNVTIYGRCRYEDKGCAFNHDPLKVNSAYQFDSKKRFNVDSPSFTPSLLPSNGSSPTISSATMKKMATISPKAANAAPFQPRSVASRSNTSTPNSRQENINPDWTVAEVQEFVPQGFDVAHMTALQGNGNGTITPTNAFDPFVTASTPLSAGGAVGPVQPNPYSHDSAALGGAAFFPGSSGFQQPVQYHMYAPIGPHNQNTLGYQRNVHDLFLPNDFREELQKKAAATLQTLPNTQLPAQIDYFHSLVPLDLNHQKNATVFGFPSWVYKAQSSKDGNFYALRRLEGFRLTNEKAIRSVQAWKRVCNGSVVTIHDAFTSRSFQDSSLIFVTDYYPLSKTLAEQHLGTGQRFQGRHNVHIPEQVLWGYMTQIANALKAIHSNGLAARIIDASKILLTGKNRIRLNACAIMDVVQYDSQRTVADLQRQDLVNFGQLIVTLGANSPTVMHNPTKAMEHFTRAYSPQMKNSVFWLLNGLQKDQDRNIDIFITGISSQLMSTFDSALHLDDQLTSDLSRELENGRLVRLMTKLNLVNERPEYEHDRQWSENGERYFLKIFRDYVFHQVDAQGDAVVDLGHVLSCLNKLDAGSDEKITLVSRDEQSCFIVSYKELKKALESSFQALLKPARRMH.

Disordered stretches follow at residues 1-26 and 103-132; these read MASAGKPALDDSRRGTGSPKMKAREN and PKAANAAPFQPRSVASRSNTSTPNSRQENI. A C3H1-type zinc finger spans residues 26-55; the sequence is NAKDTLCRNVTIYGRCRYEDKGCAFNHDPL. Residues 115–132 show a composition bias toward polar residues; the sequence is SVASRSNTSTPNSRQENI. Residues 262–522 are pseudokinase domain; it reads QTLPNTQLPA…NIDIFITGIS (261 aa). ATP is bound by residues Arg-314, 363-370, and 422-423; these read DYYPLSKT and SK. Residues 523–561 are a coiled coil; that stretch reads SQLMSTFDSALHLDDQLTSDLSRELENGRLVRLMTKLNL. A knob domain region spans residues 562-659; it reads VNERPEYEHD…ALLKPARRMH (98 aa).

It belongs to the protein kinase superfamily. PAN3 family. In terms of assembly, homodimer. Forms a heterotrimer with a catalytic subunit pan2 to form the poly(A)-nuclease (PAN) deadenylation complex. Interacts (via PAM-2 motif) with poly(A)-binding protein pab1 (via PABC domain), conferring substrate specificity of the enzyme complex.

It is found in the cytoplasm. In terms of biological role, regulatory subunit of the poly(A)-nuclease (PAN) deadenylation complex, one of two cytoplasmic mRNA deadenylases involved in mRNA turnover. PAN specifically shortens poly(A) tails of RNA and the activity is stimulated by poly(A)-binding protein pab1. PAN deadenylation is followed by rapid degradation of the shortened mRNA tails by the CCR4-NOT complex. Deadenylated mRNAs are then degraded by two alternative mechanisms, namely exosome-mediated 3'-5' exonucleolytic degradation, or deadenylation-dependent mRNA decaping and subsequent 5'-3' exonucleolytic degradation by xrn1. May also be involved in post-transcriptional maturation of mRNA poly(A) tails. pan3 acts as a positive regulator for PAN activity, recruiting the catalytic subunit pan2 to mRNA via its interaction with RNA and with pab1. The polypeptide is PAN2-PAN3 deadenylation complex subunit PAN3 (Aspergillus clavatus (strain ATCC 1007 / CBS 513.65 / DSM 816 / NCTC 3887 / NRRL 1 / QM 1276 / 107)).